A 240-amino-acid chain; its full sequence is Probable xyloglucan-specific endo-beta-1,4-glucanase A (240 aa).

The N-terminal stretch at 1-15 (MKFLTPLVLSSLASA) is a signal peptide.

It belongs to the glycosyl hydrolase 12 (cellulase H) family.

Its subcellular location is the secreted. The catalysed reaction is xyloglucan + H2O = xyloglucan oligosaccharides.. In terms of biological role, catalyzes endohydrolysis of 1,4-beta-D-glucosidic linkages in xyloglucan with retention of the beta-configuration of the glycosyl residues. Specific for xyloglucan and does not hydrolyze other cell wall components. The polypeptide is Probable xyloglucan-specific endo-beta-1,4-glucanase A (xgeA) (Aspergillus oryzae (strain ATCC 42149 / RIB 40) (Yellow koji mold)).